We begin with the raw amino-acid sequence, 637 residues long: Probable ATP-binding protein YheS (637 aa).

ABC transporter domains lie at 2-246 (IVFS…AQQQ) and 313-527 (LKME…KQEN). ATP-binding positions include 34-41 (GKNGCGKS) and 345-352 (GRNGAGKS). The segment at 523-559 (QKQENQTDEAPKENANSAQARKDQKRREAELRAQTQP) is disordered. Residues 542 to 553 (ARKDQKRREAEL) show a composition bias toward basic and acidic residues.

The protein belongs to the ABC transporter superfamily. ABCF family. YheS subfamily.

In terms of biological role, genetic data indicate it may be involved in ribosome assembly or function. Ectopic expression exacerbates the cold-sensitive growth phenotype of a bipA deletion. This chain is Probable ATP-binding protein YheS (yheS), found in Escherichia coli O6:H1 (strain CFT073 / ATCC 700928 / UPEC).